The primary structure comprises 213 residues: Protein-L-isoaspartate O-methyltransferase (213 aa).

Residue serine 61 is part of the active site.

Belongs to the methyltransferase superfamily. L-isoaspartyl/D-aspartyl protein methyltransferase family.

Its subcellular location is the cytoplasm. It catalyses the reaction [protein]-L-isoaspartate + S-adenosyl-L-methionine = [protein]-L-isoaspartate alpha-methyl ester + S-adenosyl-L-homocysteine. Functionally, catalyzes the methyl esterification of L-isoaspartyl residues in peptides and proteins that result from spontaneous decomposition of normal L-aspartyl and L-asparaginyl residues. It plays a role in the repair and/or degradation of damaged proteins. In Maricaulis maris (strain MCS10) (Caulobacter maris), this protein is Protein-L-isoaspartate O-methyltransferase.